The primary structure comprises 246 residues: Small ribosomal subunit protein uS2 (246 aa).

Belongs to the universal ribosomal protein uS2 family.

The chain is Small ribosomal subunit protein uS2 from Pseudomonas paraeruginosa (strain DSM 24068 / PA7) (Pseudomonas aeruginosa (strain PA7)).